Here is a 200-residue protein sequence, read N- to C-terminus: Large ribosomal subunit protein uL4 (200 aa).

A disordered region spans residues 38-68 (GRQGSKQQKTRSDVRGGGKRPWRQKGTGRAR). Residues 54-65 (GGKRPWRQKGTG) show a composition bias toward basic residues.

This sequence belongs to the universal ribosomal protein uL4 family. As to quaternary structure, part of the 50S ribosomal subunit.

Its function is as follows. One of the primary rRNA binding proteins, this protein initially binds near the 5'-end of the 23S rRNA. It is important during the early stages of 50S assembly. It makes multiple contacts with different domains of the 23S rRNA in the assembled 50S subunit and ribosome. Forms part of the polypeptide exit tunnel. This chain is Large ribosomal subunit protein uL4, found in Pseudomonas syringae pv. tomato (strain ATCC BAA-871 / DC3000).